The primary structure comprises 314 residues: Homeobox protein DBX1-A (314 aa).

Positions 175–234 (GMLRRAVFSDVQRKALEKMFQKQKYISKPDRKKLAAKLGLKDSQVKIWFQNRRMKWRNSK) form a DNA-binding region, homeobox. 2 disordered regions span residues 234-279 (KERE…CAPS) and 292-314 (STDS…ITVS). Over residues 258–267 (DLSDVGKKSS) the composition is skewed to basic and acidic residues. A compositionally biased stretch (acidic residues) spans 305–314 (SESEDEITVS).

It belongs to the H2.0 homeobox family.

Its subcellular location is the nucleus. This chain is Homeobox protein DBX1-A (dbx1a), found in Danio rerio (Zebrafish).